The sequence spans 532 residues: Spore coat protein SP85 (532 aa).

Residues 1 to 19 form the signal peptide; it reads MRLLSVLLIGFLCLAGTYA. Asparagine 47 carries an N-linked (GlcNAc...) asparagine glycan. The segment at 197-265 is disordered; sequence TQSPTQPPTQ…PTQPPTQPPV (69 aa). The segment covering 201-263 has biased composition (pro residues); it reads TQPPTQPPTY…YPPTQPPTQP (63 aa). In terms of domain architecture, Follistatin-like 1 spans 267–289; it reads DCSTLECPEGFHCEIVNNRRTCV. A disordered region spans residues 297–320; sequence THPPTQSPTYPPTQPPTQPPTYPP. Follistatin-like domains follow at residues 335–359, 400–423, and 430–452; these read SCDN…ARCV, TCDQ…VFCV, and TCKQ…LHCV.

In terms of assembly, binds to cotE. O-glycosylated.

The protein resides in the spore wall. Functionally, required for incorporation of cotE into the spore coat and for the formation of the outer layer. Has a cross-bridging function between cellulose and other coat proteins. In Dictyostelium discoideum (Social amoeba), this protein is Spore coat protein SP85 (pspB).